Consider the following 1978-residue polypeptide: Sodium channel protein type 8 subunit alpha (1978 aa).

Disordered stretches follow at residues 1–20 (MAARLLAPPGPDSFKPFTPE) and 28–62 (RIAESKLKKPPKADGSHREDDEDSKPKPNSDLEAG). The Cytoplasmic segment spans residues 1–132 (MAARLLAPPG…RIAIKILIHS (132 aa)). Basic and acidic residues predominate over residues 28 to 61 (RIAESKLKKPPKADGSHREDDEDSKPKPNSDLEA). The I repeat unit spans residues 114–442 (ILSPFNLIRR…KAMLEQLKKQ (329 aa)). Residues 133–151 (VFSMIIMCTILTNCVFMTF) form a helical membrane-spanning segment. The Extracellular segment spans residues 152-158 (SNPPEWS). A helical membrane pass occupies residues 159–179 (KNVEYTFTGIYTFESLVKIIA). Residues 180–193 (RGFCIDGFTFLRDP) are Cytoplasmic-facing. Residues 194-211 (WNWLDFSVIMMAYVTEFV) traverse the membrane as a helical segment. Residues 212-217 (DLGNVS) lie on the Extracellular side of the membrane. N-linked (GlcNAc...) asparagine glycosylation is present at Asn-215. Residues 218-234 (ALRTFRVLRALKTISVI) traverse the membrane as a helical segment. The Cytoplasmic segment spans residues 235–253 (PGLKTIVGALIQSVKKLSD). Residues 254-273 (VMILTVFCLSVFALIGLQLF) traverse the membrane as a helical segment. The Extracellular segment spans residues 274–355 (MGNLRNKCVV…PNYGYTSFDT (82 aa)). An intrachain disulfide couples Cys-281 to Cys-333. Asn-289, Asn-295, Asn-308, and Asn-326 each carry an N-linked (GlcNAc...) asparagine glycan. Residues 356 to 380 (FSWAFLALFRLMTQDYWENLYQLTL) constitute an intramembrane region (pore-forming). Residue Glu-373 participates in Na(+) binding. The Extracellular segment spans residues 381-387 (RAAGKTY). A helical membrane pass occupies residues 388–408 (MIFFVLVIFVGSFYLVNLILA). Over 409–751 (VVAMAYEEQN…EIVNLIVMDP (343 aa)) the chain is Cytoplasmic. Disordered regions lie at residues 446-530 (AQAA…KAFR) and 576-597 (DPGSENEFADDEHSTVEESEGR). Over residues 473–486 (SPRSSSELSKLSSK) the composition is skewed to low complexity. Over residues 489–500 (KERRNRRKKRKQ) the composition is skewed to basic residues. Basic and acidic residues-rich tracts occupy residues 501–530 (KELSEGEEKGDPEKVFKSESEDGMRRKAFR) and 586–597 (DEHSTVEESEGR). Ser-518 and Ser-520 each carry phosphoserine. The II repeat unit spans residues 733-1005 (CHPYWIKLKE…QISVIRIKKG (273 aa)). Residues 752–770 (FVDLAITICIVLNTLFMAM) traverse the membrane as a helical segment. Over 771 to 781 (EHHPMTPQFEH) the chain is Extracellular. Residues 782–801 (VLAVGNLVFTGIFTAEMFLK) form a helical membrane-spanning segment. The Cytoplasmic portion of the chain corresponds to 802–815 (LIAMDPYYYFQEGW). The chain crosses the membrane as a helical span at residues 816 to 835 (NIFDGFIVSLSLMELSLADV). The Extracellular segment spans residues 836 to 837 (EG). Residues 838–855 (LSVLRSFRLLRVFKLAKS) traverse the membrane as a helical segment. At 856-871 (WPTLNMLIKIIGNSVG) the chain is on the cytoplasmic side. The chain crosses the membrane as a helical span at residues 872–890 (ALGNLTLVLAIIVFIFAVV). Topologically, residues 891–919 (GMQLFGKSYKECVCKINQECKLPRWHMND) are extracellular. Cys-904 and Cys-910 form a disulfide bridge. An intramembrane region (pore-forming) is located at residues 920–940 (FFHSFLIVFRVLCGEWIETMW). Positions 934 and 937 each coordinate Na(+). Topologically, residues 941–953 (DCMEVAGQAMCLI) are extracellular. The cysteines at positions 942 and 951 are disulfide-linked. The helical transmembrane segment at 954-974 (VFMMVMVIGNLVVLNLFLALL) threads the bilayer. The Cytoplasmic portion of the chain corresponds to 975 to 1197 (LSSFSADNLA…TCFLIVEHNW (223 aa)). Residues 1105–1146 (NLNTEDVSSESDPEGSKDKLDDTSSSEGSTIDIKPEVEEVPV) are disordered. The stretch at 1178–1493 (LGKSWWILRK…KKYYNAMKKL (316 aa)) is one III repeat. A helical transmembrane segment spans residues 1198 to 1215 (FETFIIFMILLSSGALAF). The Extracellular segment spans residues 1216-1228 (EDIYIEQRKTIRT). A helical membrane pass occupies residues 1229–1247 (ILEYADKVFTYIFILEMLL). Residues 1248–1261 (KWTAYGFVKFFTNA) lie on the Cytoplasmic side of the membrane. A helical membrane pass occupies residues 1262–1280 (WCWLDFLIVAVSLVSLIAN). Residues 1281–1288 (ALGYSELG) lie on the Extracellular side of the membrane. A helical transmembrane segment spans residues 1289–1307 (AIKSLRTLRALRPLRALSR). The Cytoplasmic segment spans residues 1308–1324 (FEGMRVVVNALVGAIPS). Residues 1325–1344 (IMNVLLVCLIFWLIFSIMGV) traverse the membrane as a helical segment. Residues 1345–1397 (NLFAGKYHYCFNETSEIRFEIDIVNNKTDCEKLMEGNSTEIRWKNVKINFDNV) lie on the Extracellular side of the membrane. Cys-1354 and Cys-1374 form a disulfide bridge. Residues Asn-1356, Asn-1370, and Asn-1381 are each glycosylated (N-linked (GlcNAc...) asparagine). Positions 1398-1419 (GAGYLALLQVATFKGWMDIMYA) form an intramembrane region, pore-forming. At 1420 to 1436 (AVDSRKPDEQPDYEGNI) the chain is on the extracellular side. A helical transmembrane segment spans residues 1437 to 1458 (YMYIYFVIFIIFGSFFTLNLFI). Residues 1459-1521 (GVIIDNFNQQ…IVFDFVTQQA (63 aa)) are Cytoplasmic-facing. Phosphoserine; by PKC is present on Ser-1495. An IV repeat occupies 1502–1799 (IPRPLNKIQG…WEKFDPDATQ (298 aa)). The chain crosses the membrane as a helical span at residues 1522–1539 (FDIVIMMLICLNMVTMMV). Topologically, residues 1540 to 1550 (ETDTQSKQMEN) are extracellular. A helical transmembrane segment spans residues 1551 to 1569 (ILYWINLVFVIFFTCECVL). Topologically, residues 1570-1581 (KMFALRHYYFTI) are cytoplasmic. The helical transmembrane segment at 1582 to 1599 (GWNIFDFVVVILSIVGMF) threads the bilayer. The Extracellular segment spans residues 1600-1612 (LADIIEKYFVSPT). Residues 1613-1629 (LFRVIRLARIGRILRLI) form a helical membrane-spanning segment. Residues 1630 to 1648 (KGAKGIRTLLFALMMSLPA) are Cytoplasmic-facing. The chain crosses the membrane as a helical span at residues 1649–1666 (LFNIGLLLFLVMFIFSIF). Residues 1667-1688 (GMSNFAYVKHEAGIDDMFNFET) lie on the Extracellular side of the membrane. The segment at residues 1689–1711 (FGNSMICLFQITTSAGWDGLLLP) is an intramembrane region (pore-forming). The Extracellular portion of the chain corresponds to 1712–1740 (ILNRPPDCSLDKEHPGSGFKGDCGNPSVG). Cys-1719 and Cys-1734 are joined by a disulfide. A helical transmembrane segment spans residues 1741 to 1763 (IFFFVSYIIISFLIVVNMYIAII). Residues 1764 to 1978 (LENFSVATEE…RQKEVRESKC (215 aa)) lie on the Cytoplasmic side of the membrane. The 30-residue stretch at 1893-1922 (EEVSAVVLQRAYRGHLARRGFICRKMASNK) folds into the IQ domain. Positions 1923 to 1978 (LENGGTHRDKKESTPSTASLPSYDSVTKPDKEKQQRAEEGRRERAKRQKEVRESKC) are disordered. A compositionally biased stretch (polar residues) spans 1936–1947 (TPSTASLPSYDS). The span at 1949 to 1978 (TKPDKEKQQRAEEGRRERAKRQKEVRESKC) shows a compositional bias: basic and acidic residues.

The protein belongs to the sodium channel (TC 1.A.1.10) family. Nav1.6/SCN8A subfamily. In terms of assembly, the voltage-sensitive sodium channel consists of an ion-conducting pore-forming alpha subunit regulated by one or more beta-1 (SCN1B), beta-2 (SCN2B), beta-3 (SCN3B) and/or beta-4 (SCN4B) subunits. Beta-1 (SCN1B) and beta-3 (SCN3B) are non-covalently associated with alpha, while beta-2 (SCN2B) and beta-4 (SCN4B) are covalently linked by disulfide bonds. Interacts with NEDD4 and NEDD4L. Interacts with FGF13. Interacts with FGF14, GBG3, GBB2 and SCN1B. Interacts with TMEM233. Interacts with the conotoxin GVIIJ. Interacts with CALM1; the interaction modulates the inactivation rate of SCN8A. May be ubiquitinated by NEDD4L; which would promote its endocytosis. In terms of processing, phosphorylation at Ser-1495 by PKC in a highly conserved cytoplasmic loop slows inactivation of the sodium channel and reduces peak sodium currents. Isoform 1 is highly expressed in brain, moderately in spinal cord, and at low levels in dorsal root ganglia, nodose ganglia and superior cervical ganglia. Not detected in sciatic nerve and non-neuronal tissues. Isoform 2 is hardly detectable, if at all, in brain, expressed at low levels in spinal cord and at highest levels in dorsal root ganglia.

The protein resides in the cell membrane. Its subcellular location is the cell projection. It is found in the axon. The catalysed reaction is Na(+)(in) = Na(+)(out). Pore-forming subunit of a voltage-gated sodium channel complex assuming opened or closed conformations in response to the voltage difference across membranes and through which sodium ions selectively pass along their electrochemical gradient. Contributes to neuronal excitability by regulating action potential threshold and propagation. The chain is Sodium channel protein type 8 subunit alpha from Rattus norvegicus (Rat).